The chain runs to 368 residues: Decarboxylase yanB (368 aa).

Zn(2+) is bound by residues H7, H9, and H159. N169 carries N-linked (GlcNAc...) asparagine glycosylation. D283 provides a ligand contact to Zn(2+). The helical transmembrane segment at 339 to 359 threads the bilayer; that stretch reads WGAFSACLLLPVGLSALYSVL.

Belongs to the metallo-dependent hydrolases superfamily. ACMSD family.

The protein localises to the membrane. The catalysed reaction is 6-methylsalicylate + H(+) = 3-methylphenol + CO2. The protein operates within secondary metabolite biosynthesis; terpenoid biosynthesis. Decarboxylase; part of the gene cluster that mediates the biosynthesis of yanuthone D, a fungal isoprenoid epoxycyclohexenone that acts as an antibiotic against fungi and bacteria. The first step of the pathway is the synthesis of 6-methylsalicylic acid (6-MSA) by the polyketide synthase yanA. 6-MSA is then converted to m-cresol by the decarboxylase yanB. The cytochrome P450 monooxygenase yanC then catalyzes the oxidation of m-cresol to toluquinol. Epoxidation of toluquinol is then performed by the short chain dehydrogenase yanD, with the help of yanE, and a further prenylation by yanG leads to 7-deacetoxyyanuthone A. The next step is the hydroxylation of C-22 of 7-deacetoxyyanuthone A by the cytochrome P450 monooxygenase yanH to yield 22-deacetylyanuthone A. O-Mevalon transferase yanI then attaches mevalon to the hydroxyl group of 22-deacetylyanuthone A to produce yanuthone E. Finally, the FAD-dependent monooxygenase yanF oxidizes the hydroxyl group at C15 of yanuthone E to form yanuthone D. Furthermore, several branching points in the pathway lead to the production of yanuthones F and G from 7-deacetoxyyanuthone A; yanuthones H and I from 22-deacetylyanuthone A; and yanuthone J from yanuthone E. The polypeptide is Decarboxylase yanB (Aspergillus niger (strain ATCC 1015 / CBS 113.46 / FGSC A1144 / LSHB Ac4 / NCTC 3858a / NRRL 328 / USDA 3528.7)).